Reading from the N-terminus, the 560-residue chain is Probable pectinesterase/pectinesterase inhibitor 20 (560 aa).

Positions 1–24 (MSQKLMFLFTLACLSSLPSPFISA) are cleaved as a signal peptide. The tract at residues 25-179 (QIPAIGNATS…TKLYGVSLAL (155 aa)) is pectinesterase inhibitor 20. Residues N31, N168, N251, N255, N268, N307, and N314 are each glycosylated (N-linked (GlcNAc...) asparagine). A pectinesterase 20 region spans residues 246-544 (VTVIQNGTGN…FTVTNFLVGE (299 aa)). T323 provides a ligand contact to substrate. N340 carries N-linked (GlcNAc...) asparagine glycosylation. Residue Q353 coordinates substrate. Catalysis depends on D376, which acts as the Proton donor; for pectinesterase activity. C390 and C410 form a disulfide bridge. The Nucleophile; for pectinesterase activity role is filled by D397. Residues 417–441 (PRKGQSNEVTAQGRTDPNQNTGTAI) are disordered. Residues 419-439 (KGQSNEVTAQGRTDPNQNTGT) are compositionally biased toward polar residues. Residue N456 is glycosylated (N-linked (GlcNAc...) asparagine). Positions 465 and 467 each coordinate substrate. N-linked (GlcNAc...) asparagine glycosylation is found at N507, N528, and N534.

In the N-terminal section; belongs to the PMEI family. The protein in the C-terminal section; belongs to the pectinesterase family. Expressed in flower buds.

The protein localises to the secreted. The protein resides in the cell wall. The enzyme catalyses [(1-&gt;4)-alpha-D-galacturonosyl methyl ester](n) + n H2O = [(1-&gt;4)-alpha-D-galacturonosyl](n) + n methanol + n H(+). It functions in the pathway glycan metabolism; pectin degradation; 2-dehydro-3-deoxy-D-gluconate from pectin: step 1/5. Its function is as follows. Acts in the modification of cell walls via demethylesterification of cell wall pectin. This is Probable pectinesterase/pectinesterase inhibitor 20 (PME20) from Arabidopsis thaliana (Mouse-ear cress).